The primary structure comprises 445 residues: Reticulon-4 receptor-like 1 (445 aa).

Residues 1–24 (MLRKGCCVELLLLLLAGELPLSGG) form the signal peptide. In terms of domain architecture, LRRNT spans 25 to 54 (CPRDCVCYPSPMTVSCQAHNFAAIPEGIPE). 8 LRR repeats span residues 55–76 (DSER…HFSP), 77–98 (AMVT…TFEG), 101–123 (HLEE…TFQG), 126–147 (KLHA…IFGG), 150–171 (SLQY…IFVD), 174–195 (NLSH…IFRG), 198–219 (NLDR…AFHD), and 222–243 (RLTT…CLAP). An LRRCT domain is found at 255 to 306 (NAWDCGCRARSLWEWLRRFRGSSSVVPCATPELRQGQDLKSLRVEDFRNCTG). 2 disordered regions span residues 304–380 (CTGP…ELPE) and 401–421 (RPKR…SGVQ). 2 stretches are compositionally biased toward basic residues: residues 352-366 (GSKK…HRNR) and 401-413 (RPKR…RRTP). Ser424 is lipidated: GPI-anchor amidated serine. The chain crosses the membrane as a helical span at residues 424 to 444 (SSGTALGVSLLAWILGLVVSL). A propeptide spans 425–445 (SGTALGVSLLAWILGLVVSLR) (removed in mature form).

It belongs to the Nogo receptor family. Identified in a complex that contains RTN4R, RTN4RL1 and NGFR; the interaction depends on the presence of chondroitin sulfate proteoglycans. Does not interact with MAG, OMG and RTN4. As to expression, detected in brain (at protein level). Expressed in various regions of the brain, including the cerebral cortex, hippocampus, striatum, thalamus and cerebellum.

Its subcellular location is the cell membrane. It localises to the membrane raft. The protein resides in the perikaryon. It is found in the cell projection. Its function is as follows. Cell surface receptor. Plays a functionally redundant role in postnatal brain development and in regulating axon regeneration in the adult central nervous system. Contributes to normal axon migration across the brain midline and normal formation of the corpus callosum. Protects motoneurons against apoptosis; protection against apoptosis is probably mediated by MAG. Plays a role in inhibiting neurite outgrowth and axon regeneration via its binding to neuronal chondroitin sulfate proteoglycans. Binds heparin. Like other family members, plays a role in restricting the number dendritic spines and the number of synapses that are formed during brain development. Signaling mediates activation of Rho and downstream reorganization of the actin cytoskeleton. This is Reticulon-4 receptor-like 1 from Rattus norvegicus (Rat).